The chain runs to 218 residues: Glutathione S-transferase Mu 4 (218 aa).

Residues 1-88 (MPMTLGYWDI…YIARKHNLCG (88 aa)) form the GST N-terminal domain. Glutathione is bound by residues 7–8 (YW), 46–50 (WLSEK), 59–60 (NL), and 72–73 (QS). Positions 90–208 (TEEEKIRVDI…KTSRFLRTPL (119 aa)) constitute a GST C-terminal domain. Residue Tyr116 participates in substrate binding.

This sequence belongs to the GST superfamily. Mu family. As to quaternary structure, homodimer.

The protein localises to the cytoplasm. The catalysed reaction is RX + glutathione = an S-substituted glutathione + a halide anion + H(+). It carries out the reaction 1-chloro-2,4-dinitrobenzene + glutathione = 2,4-dinitrophenyl-S-glutathione + chloride + H(+). It catalyses the reaction (13S,14S)-epoxy-(4Z,7Z,9E,11E,16Z,19Z)-docosahexaenoate + glutathione = (13R)-S-glutathionyl-(14S)-hydroxy-(4Z,7Z,9E,11E,16Z,19Z)-docosahexaenoate. The enzyme catalyses leukotriene C4 = leukotriene A4 + glutathione. Conjugation of reduced glutathione to a wide number of exogenous and endogenous hydrophobic electrophiles. Catalyzes the conjugation of leukotriene A4 with reduced glutathione (GSH) to form leukotriene C4. Can also catalyze the transfer of a glutathionyl group from glutathione (GSH) to 13(S),14(S)-epoxy-docosahexaenoic acid to form maresin conjugate in tissue regeneration 1 (MCTR1), a bioactive lipid mediator that possess potent anti-inflammatory and proresolving actions. The protein is Glutathione S-transferase Mu 4 (Gstm4) of Rattus norvegicus (Rat).